Consider the following 434-residue polypeptide: Tryptophan synthase beta chain 2 (434 aa).

Lys110 carries the post-translational modification N6-(pyridoxal phosphate)lysine.

It belongs to the TrpB family. As to quaternary structure, tetramer of two alpha and two beta chains. It depends on pyridoxal 5'-phosphate as a cofactor.

The catalysed reaction is (1S,2R)-1-C-(indol-3-yl)glycerol 3-phosphate + L-serine = D-glyceraldehyde 3-phosphate + L-tryptophan + H2O. It participates in amino-acid biosynthesis; L-tryptophan biosynthesis; L-tryptophan from chorismate: step 5/5. Functionally, the beta subunit is responsible for the synthesis of L-tryptophan from indole and L-serine. The chain is Tryptophan synthase beta chain 2 (trpB2) from Aquifex aeolicus (strain VF5).